The following is a 340-amino-acid chain: Phosphoribosylformylglycinamidine cyclo-ligase (340 aa).

Belongs to the AIR synthase family.

The protein localises to the cytoplasm. It carries out the reaction 2-formamido-N(1)-(5-O-phospho-beta-D-ribosyl)acetamidine + ATP = 5-amino-1-(5-phospho-beta-D-ribosyl)imidazole + ADP + phosphate + H(+). It functions in the pathway purine metabolism; IMP biosynthesis via de novo pathway; 5-amino-1-(5-phospho-D-ribosyl)imidazole from N(2)-formyl-N(1)-(5-phospho-D-ribosyl)glycinamide: step 2/2. The chain is Phosphoribosylformylglycinamidine cyclo-ligase from Streptococcus pyogenes serotype M6 (strain ATCC BAA-946 / MGAS10394).